A 360-amino-acid polypeptide reads, in one-letter code: MIEDTMTLLSLLGRIMRYFLLRPETLFLLCISLALWSYFFHTDEVKTIVKSSRDAVKMVKGKVAEIMQNDRLGGLDVLEAEFSKTWEFKSHNVAVYSIQGRRDHMEDRFEVLTDLANKTHPSIFGIFDGHGGETAAEYVKSRLPEALKQHLQDYEKDKENSVLTYQTILEQQILSIDREMLEKLTVSYDEAGTTCLIALLSDKDLTVANVGDSRGVLCDKDGNAIPLSHDHKPYQLKERKRIKRAGGFISFNGSWRVQGILAMSRSLGDYPLKNLNVVIPDPDILTFDLDKLQPEFMILASDGLWDAFSNEEAVRFIKERLDEPHFGAKSIVLQSFYRGCPDNITVMVVKFRNSSKTEEH.

Residues 1-25 (MIEDTMTLLSLLGRIMRYFLLRPET) are Extracellular-facing. Residues 26 to 42 (LFLLCISLALWSYFFHT) form a helical membrane-spanning segment. The Cytoplasmic segment spans residues 43-360 (DEVKTIVKSS…FRNSSKTEEH (318 aa)). The PPM-type phosphatase domain occupies 92 to 351 (NVAVYSIQGR…DNITVMVVKF (260 aa)). Mn(2+) is bound by residues aspartate 128, glycine 129, aspartate 302, and aspartate 342.

It belongs to the PP2C family. Interacts with MAP3K7/TAK1 and MAP3K5. It depends on Mg(2+) as a cofactor. Mn(2+) is required as a cofactor. In terms of tissue distribution, expressed in brain, heart, testis, liver, lung and skeletal muscle.

It is found in the membrane. It carries out the reaction O-phospho-L-seryl-[protein] + H2O = L-seryl-[protein] + phosphate. The enzyme catalyses O-phospho-L-threonyl-[protein] + H2O = L-threonyl-[protein] + phosphate. Acts as a suppressor of the SAPK signaling pathways by associating with and dephosphorylating MAP3K7/TAK1 and MAP3K5, and by attenuating the association between MAP3K7/TAK1 and MAP2K4 or MAP2K6. This Mus musculus (Mouse) protein is Protein phosphatase 1L (Ppm1l).